The sequence spans 67 residues: Large ribosomal subunit protein uL29 (67 aa).

It belongs to the universal ribosomal protein uL29 family.

The sequence is that of Large ribosomal subunit protein uL29 from Rhizorhabdus wittichii (strain DSM 6014 / CCUG 31198 / JCM 15750 / NBRC 105917 / EY 4224 / RW1) (Sphingomonas wittichii).